A 159-amino-acid polypeptide reads, in one-letter code: MNHSETITIECTINGMPFQLHAVPGTPLSELLREQGLLSVKQGCCVGECGACTVLVDGTAIDSCLYLAAWAEGKEIRTLEGEAKGGKLSHVQQAYAKSGAVQCGFCTPGLIMATTAMLAKPREKPLTITEIRRGLAGNLCRCTGYQMIVNTVLDCEKTK.

The 76-residue stretch at 7 to 82 (ITIECTINGM…GKEIRTLEGE (76 aa)) folds into the 2Fe-2S ferredoxin-type domain. [2Fe-2S] cluster is bound by residues cysteine 44, cysteine 49, and cysteine 52.

Heterotrimer of XdhA, XdhB and XdhC. [2Fe-2S] cluster serves as cofactor.

It participates in purine metabolism; hypoxanthine degradation; urate from hypoxanthine: step 1/2. Iron-sulfur subunit of the xanthine dehydrogenase complex. This Escherichia coli O157:H7 protein is Xanthine dehydrogenase iron-sulfur-binding subunit (xdhC).